Here is a 3312-residue protein sequence, read N- to C-terminus: Cadherin EGF LAG seven-pass G-type receptor 3 (3312 aa).

The N-terminal stretch at 1-32 is a signal peptide; that stretch reads MMARRPPWRGLGGRSTPILLLLLLSLFPLSQE. Topologically, residues 33–2540 are extracellular; the sequence is ELGGGGHQGW…RLEGDLELLA (2508 aa). Disordered stretches follow at residues 90–112, 143–199, and 212–306; these read GRRQ…LGIE, GRTG…RKRV, and GSKG…EARK. The span at 159–173 shows a compositional bias: low complexity; the sequence is SSGVPGSGNSSPLPS. Residues 290–299 show a composition bias toward pro residues; the sequence is RPGPRPPGLP. Cadherin domains lie at 326-433, 434-545, 546-651, 652-756, 757-858, 859-961, 962-1067, 1068-1169, and 1170-1265; these read PQYN…SPVF, EQAQ…APQF, SEKR…IPIF, VSTP…RPEF, TMKE…RPVF, QSAH…APQF, VASH…APVF, PAEE…SPVL, and NNFQ…RVVI. Residue asparagine 632 is glycosylated (N-linked (GlcNAc...) asparagine). Asparagine 847 carries an N-linked (GlcNAc...) asparagine glycan. 4 N-linked (GlcNAc...) asparagine glycosylation sites follow: asparagine 1182, asparagine 1222, asparagine 1317, and asparagine 1327. An EGF-like 1; calcium-binding domain is found at 1375–1433; that stretch reads DDNVCLREPCENYMKCVSVLRFDSSAPFLASASTLFRPIQPIAGLRCRCPPGFTGDFCE. 9 disulfide bridges follow: cysteine 1379-cysteine 1390, cysteine 1384-cysteine 1421, cysteine 1423-cysteine 1432, cysteine 1439-cysteine 1450, cysteine 1444-cysteine 1459, cysteine 1461-cysteine 1470, cysteine 1479-cysteine 1490, cysteine 1484-cysteine 1500, and cysteine 1502-cysteine 1513. The 37-residue stretch at 1435–1471 folds into the EGF-like 2; calcium-binding domain; it reads ELDLCYSNPCRNGGACARREGGYTCVCRPRFTGEDCE. The 40-residue stretch at 1475–1514 folds into the EGF-like 3; calcium-binding domain; sequence EAGRCVPGVCRNGGTCTDAPNGGFRCQCPAGGAFEGPRCE. The Laminin G-like 1 domain maps to 1515–1719; the sequence is VAARSFPPSS…VANNGTMAGC (205 aa). Residues asparagine 1649 and asparagine 1713 are each glycosylated (N-linked (GlcNAc...) asparagine). 4 cysteine pairs are disulfide-bonded: cysteine 1693-cysteine 1719, cysteine 1726-cysteine 1737, cysteine 1731-cysteine 1746, and cysteine 1748-cysteine 1757. The 37-residue stretch at 1722-1758 folds into the EGF-like 4; calcium-binding domain; it reads KLHFCDSGPCKNSGFCSERWGSFSCDCPVGFGGKDCQ. The Laminin G-like 2 domain occupies 1764–1944; sequence PHHFRGNGTL…SHRVNAEPGC (181 aa). Asparagine 1770 carries N-linked (GlcNAc...) asparagine glycosylation. 9 cysteine pairs are disulfide-bonded: cysteine 1915/cysteine 1944, cysteine 1950/cysteine 1961, cysteine 1955/cysteine 1970, cysteine 1972/cysteine 1981, cysteine 1985/cysteine 1996, cysteine 1990/cysteine 2008, cysteine 2010/cysteine 2019, cysteine 2027/cysteine 2040, and cysteine 2042/cysteine 2052. In terms of domain architecture, EGF-like 5; calcium-binding spans 1946-1982; it reads VTNACASGPCPPHADCRDLWQTFSCTCQPGYYGPGCV. Aspartate 1963 is modified ((3R)-3-hydroxyaspartate). The EGF-like 6; calcium-binding domain maps to 1983–2020; that stretch reads DACLLNPCQNQGSCRHLPGAPHGYTCDCVGGYFGHHCE. One can recognise an EGF-like 7; calcium-binding domain in the interval 2021-2053; sequence HRMDQQCPRGWWGSPTCGPCNCDVHKGFDPNCN. An N-linked (GlcNAc...) asparagine glycan is attached at asparagine 2053. An EGF-like 8; calcium-binding domain is found at 2055–2090; it reads TNGQCHCKEFHYRPRGSDSCLPCDCYPVGSTSRSCA. Cystine bridges form between cysteine 2059–cysteine 2074, cysteine 2061–cysteine 2077, cysteine 2079–cysteine 2089, cysteine 2098–cysteine 2107, and cysteine 2110–cysteine 2122. Positions 2077 to 2124 constitute a Laminin EGF-like domain; that stretch reads CDCYPVGSTSRSCAPHSGQCPCRPGALGRQCNSCDSPFAEVTASGCRV. Tyrosine 2126 carries the phosphotyrosine modification. N-linked (GlcNAc...) asparagine glycosylation is found at asparagine 2177, asparagine 2196, asparagine 2386, asparagine 2474, and asparagine 2506. Positions 2361 to 2399 are disordered; that stretch reads THVLLPSQSPRPSPSEVLPTSSSIENSTTSSVVPPPAPP. The GAIN-B domain occupies 2368–2530; that stretch reads QSPRPSPSEV…GVLMDASPRE (163 aa). Residues 2380–2391 show a composition bias toward low complexity; the sequence is TSSSIENSTTSS. Cystine bridges form between cysteine 2480–cysteine 2512 and cysteine 2500–cysteine 2514. Residues 2480–2530 are GPS; that stretch reads CVQWDPPGLAEQHGVWTARDCELVHRNGSHARCRCSRTGTFGVLMDASPRE. Residues 2541–2561 traverse the membrane as a helical segment; it reads VFTHVVVAVSVAALVLTAAIL. At 2562–2572 the chain is on the cytoplasmic side; the sequence is LSLRSLKSNVR. Residues 2573–2593 form a helical membrane-spanning segment; the sequence is GIHANVAAALGVAELLFLLGI. The Extracellular segment spans residues 2594–2601; sequence HRTHNQLV. A helical membrane pass occupies residues 2602–2622; it reads CTAVAILLHYFFLSTFAWLFV. The Cytoplasmic portion of the chain corresponds to 2623–2643; the sequence is QGLHLYRMQVEPRNVDRGAMR. The chain crosses the membrane as a helical span at residues 2644-2664; that stretch reads FYHALGWGVPAVLLGLAVGLD. The Extracellular segment spans residues 2665–2681; sequence PEGYGNPDFCWISVHEP. Residues 2682 to 2702 form a helical membrane-spanning segment; the sequence is LIWSFAGPVVLVIVMNGTMFL. Residues 2703-2725 are Cytoplasmic-facing; it reads LAARTSCSTGQREAKKTSALTLR. A helical membrane pass occupies residues 2726–2746; that stretch reads SSFLLLLLVSASWLFGLLAVN. The Extracellular segment spans residues 2747-2753; it reads HSILAFH. Residues 2754-2774 form a helical membrane-spanning segment; the sequence is YLHAGLCGLQGLAVLLLFCVL. Residues 2775–3312 lie on the Cytoplasmic side of the membrane; sequence NADARAAWMP…SEVPRSEGHS (538 aa). Disordered regions lie at residues 2888-2927 and 2978-3006; these read AGAD…QRPL and TSKD…AQRQ. The span at 2890 to 2900 shows a compositional bias: acidic residues; sequence ADSDSDSDLSL. The residue at position 3051 (tyrosine 3051) is a Phosphotyrosine. 2 disordered regions span residues 3086–3243 and 3256–3312; these read EEAP…TEQL and SALS…EGHS. The residue at position 3097 (serine 3097) is a Phosphoserine. Composition is skewed to low complexity over residues 3175–3198, 3256–3265, and 3272–3281; these read SPQR…SRSS, SALSSVQSSS, and TTATPSATAS. Positions 3287–3300 are enriched in polar residues; sequence TPRSATSHSISELS.

The protein belongs to the G-protein coupled receptor 2 family. LN-TM7 subfamily.

The protein resides in the cell membrane. Functionally, receptor that may have an important role in cell/cell signaling during nervous system formation. The polypeptide is Cadherin EGF LAG seven-pass G-type receptor 3 (CELSR3) (Homo sapiens (Human)).